The chain runs to 115 residues: NADH-ubiquinone oxidoreductase chain 3 (115 aa).

The next 3 helical transmembrane spans lie at 4-24, 55-75, and 86-106; these read LTAL…AFWL, FFLV…LLPL, and VMML…AYEW.

Belongs to the complex I subunit 3 family. In terms of assembly, core subunit of respiratory chain NADH dehydrogenase (Complex I) which is composed of 45 different subunits. Interacts with TMEM186. Interacts with TMEM242.

It localises to the mitochondrion inner membrane. It catalyses the reaction a ubiquinone + NADH + 5 H(+)(in) = a ubiquinol + NAD(+) + 4 H(+)(out). Its function is as follows. Core subunit of the mitochondrial membrane respiratory chain NADH dehydrogenase (Complex I) which catalyzes electron transfer from NADH through the respiratory chain, using ubiquinone as an electron acceptor. Essential for the catalytic activity of complex I. The polypeptide is NADH-ubiquinone oxidoreductase chain 3 (Isthmomys pirrensis (Mount Pirri Isthmus rat)).